A 478-amino-acid polypeptide reads, in one-letter code: Glycogen synthase (478 aa).

Residue K16 coordinates ADP-alpha-D-glucose.

It belongs to the glycosyltransferase 1 family. Bacterial/plant glycogen synthase subfamily.

The enzyme catalyses [(1-&gt;4)-alpha-D-glucosyl](n) + ADP-alpha-D-glucose = [(1-&gt;4)-alpha-D-glucosyl](n+1) + ADP + H(+). The protein operates within glycan biosynthesis; glycogen biosynthesis. Functionally, synthesizes alpha-1,4-glucan chains using ADP-glucose. The chain is Glycogen synthase from Lachnospira eligens (strain ATCC 27750 / DSM 3376 / VPI C15-48 / C15-B4) (Eubacterium eligens).